The primary structure comprises 188 residues: Adenine phosphoribosyltransferase (188 aa).

This sequence belongs to the purine/pyrimidine phosphoribosyltransferase family. As to quaternary structure, homodimer.

Its subcellular location is the cytoplasm. The enzyme catalyses AMP + diphosphate = 5-phospho-alpha-D-ribose 1-diphosphate + adenine. Its pathway is purine metabolism; AMP biosynthesis via salvage pathway; AMP from adenine: step 1/1. Catalyzes a salvage reaction resulting in the formation of AMP, that is energically less costly than de novo synthesis. The protein is Adenine phosphoribosyltransferase of Salinispora arenicola (strain CNS-205).